A 253-amino-acid polypeptide reads, in one-letter code: Ubiquinone biosynthesis O-methyltransferase (253 aa).

Residues R47, G78, D99, and M141 each coordinate S-adenosyl-L-methionine.

Belongs to the methyltransferase superfamily. UbiG/COQ3 family.

The catalysed reaction is a 3-demethylubiquinol + S-adenosyl-L-methionine = a ubiquinol + S-adenosyl-L-homocysteine + H(+). It carries out the reaction a 3-(all-trans-polyprenyl)benzene-1,2-diol + S-adenosyl-L-methionine = a 2-methoxy-6-(all-trans-polyprenyl)phenol + S-adenosyl-L-homocysteine + H(+). It participates in cofactor biosynthesis; ubiquinone biosynthesis. In terms of biological role, O-methyltransferase that catalyzes the 2 O-methylation steps in the ubiquinone biosynthetic pathway. The sequence is that of Ubiquinone biosynthesis O-methyltransferase from Bradyrhizobium diazoefficiens (strain JCM 10833 / BCRC 13528 / IAM 13628 / NBRC 14792 / USDA 110).